The primary structure comprises 603 residues: Glutamyl-tRNA(Gln) amidotransferase subunit B, mitochondrial (603 aa).

The N-terminal 32 residues, 1-32 (MIRHRLRLALSAAPVTATGRRTRSKTAPRRSL), are a transit peptide targeting the mitochondrion. Residues 12–59 (AAPVTATGRRTRSKTAPRRSLSTQQTQSSASSSSNNLDGDGRAFVPLR) form a disordered region. Residues 31–48 (SLSTQQTQSSASSSSNNL) are compositionally biased toward low complexity.

The protein belongs to the GatB/GatE family. GatB subfamily. Subunit of the heterotrimeric GatCAB amidotransferase (AdT) complex, composed of A, B and C subunits.

It localises to the mitochondrion. It catalyses the reaction L-glutamyl-tRNA(Gln) + L-glutamine + ATP + H2O = L-glutaminyl-tRNA(Gln) + L-glutamate + ADP + phosphate + H(+). Functionally, allows the formation of correctly charged Gln-tRNA(Gln) through the transamidation of misacylated Glu-tRNA(Gln) in the mitochondria. The reaction takes place in the presence of glutamine and ATP through an activated gamma-phospho-Glu-tRNA(Gln). The chain is Glutamyl-tRNA(Gln) amidotransferase subunit B, mitochondrial from Arthroderma otae (strain ATCC MYA-4605 / CBS 113480) (Microsporum canis).